Reading from the N-terminus, the 330-residue chain is tRNA U34 carboxymethyltransferase (330 aa).

Carboxy-S-adenosyl-L-methionine-binding positions include Lys91, Trp105, Lys110, Gly130, 152–154 (DPS), 181–182 (IE), Met196, Tyr200, and Arg315.

This sequence belongs to the class I-like SAM-binding methyltransferase superfamily. CmoB family. In terms of assembly, homotetramer.

The catalysed reaction is carboxy-S-adenosyl-L-methionine + 5-hydroxyuridine(34) in tRNA = 5-carboxymethoxyuridine(34) in tRNA + S-adenosyl-L-homocysteine + H(+). In terms of biological role, catalyzes carboxymethyl transfer from carboxy-S-adenosyl-L-methionine (Cx-SAM) to 5-hydroxyuridine (ho5U) to form 5-carboxymethoxyuridine (cmo5U) at position 34 in tRNAs. The protein is tRNA U34 carboxymethyltransferase of Shewanella frigidimarina (strain NCIMB 400).